The primary structure comprises 210 residues: Transposable element activator uncharacterized 23 kDa protein (210 aa).

Residues 67-78 are compositionally biased toward basic and acidic residues; it reads SGRMGGPRRDGR. A disordered region spans residues 67 to 87; it reads SGRMGGPRRDGRVASSGVEGG.

The sequence is that of Transposable element activator uncharacterized 23 kDa protein from Zea mays (Maize).